A 473-amino-acid polypeptide reads, in one-letter code: Monocarboxylate transporter 4 (473 aa).

Residues Met-1–Asp-17 lie on the Cytoplasmic side of the membrane. The helical transmembrane segment at Gly-18–Phe-38 threads the bilayer. Topologically, residues Pro-39–Ala-61 are extracellular. Residues Trp-62–Val-82 form a helical membrane-spanning segment. Over Asn-83 to Met-91 the chain is Cytoplasmic. Residues Leu-92–Val-112 form a helical membrane-spanning segment. The Extracellular portion of the chain corresponds to Gln-113 to Tyr-115. Residues Leu-116–Met-136 traverse the membrane as a helical segment. Topologically, residues Leu-137 to Asn-149 are cytoplasmic. The helical transmembrane segment at Gly-150–Leu-170 threads the bilayer. Over Gln-171 to Gly-179 the chain is Extracellular. A helical transmembrane segment spans residues Phe-180 to Leu-200. Residues Glu-201–Gly-231 lie on the Cytoplasmic side of the membrane. Residues Phe-232 to Phe-252 form a helical membrane-spanning segment. Over Val-253 to Ala-268 the chain is Extracellular. The helical transmembrane segment at Phe-269–Ala-289 threads the bilayer. Topologically, residues Gly-290–Arg-297 are cytoplasmic. The chain crosses the membrane as a helical span at residues Cys-298 to Met-318. The Extracellular segment spans residues Ser-319–Asp-321. Residues Tyr-322–Leu-342 traverse the membrane as a helical segment. Residues Gln-343–Ser-358 lie on the Cytoplasmic side of the membrane. The chain crosses the membrane as a helical span at residues Ala-359–Gly-379. The Extracellular segment spans residues Lys-380 to Tyr-388. The helical transmembrane segment at Met-389–Gly-409 threads the bilayer. The Cytoplasmic segment spans residues Asn-410 to Val-473. A disordered region spans residues Pro-421–Asp-447. 2 basolateral sorting signal regions span residues Ala-427–Ile-449 and Ile-449–Val-473.

It belongs to the major facilitator superfamily. Monocarboxylate porter (TC 2.A.1.13) family. In terms of assembly, interacts with BSG; interaction mediates SLC16A3 targeting to the plasma membrane.

It localises to the cell membrane. The protein localises to the basolateral cell membrane. The catalysed reaction is (S)-lactate(in) + H(+)(in) = (S)-lactate(out) + H(+)(out). It catalyses the reaction pyruvate(out) + H(+)(out) = pyruvate(in) + H(+)(in). In terms of biological role, proton-dependent transporter of monocarboxylates such as L-lactate and pyruvate. Plays a predominant role in the L-lactate efflux from highly glycolytic cells. The chain is Monocarboxylate transporter 4 (SLC16A3) from Gallus gallus (Chicken).